Here is a 698-residue protein sequence, read N- to C-terminus: DNA-directed RNA polymerase subunit beta' (698 aa).

Residues cysteine 69, cysteine 71, cysteine 89, and cysteine 92 each contribute to the Zn(2+) site. Mg(2+) contacts are provided by aspartate 509, aspartate 511, and aspartate 513.

The protein belongs to the RNA polymerase beta' chain family. RpoC1 subfamily. As to quaternary structure, in plastids the minimal PEP RNA polymerase catalytic core is composed of four subunits: alpha, beta, beta', and beta''. When a (nuclear-encoded) sigma factor is associated with the core the holoenzyme is formed, which can initiate transcription. Mg(2+) serves as cofactor. The cofactor is Zn(2+).

It is found in the plastid. Its subcellular location is the chloroplast. It carries out the reaction RNA(n) + a ribonucleoside 5'-triphosphate = RNA(n+1) + diphosphate. DNA-dependent RNA polymerase catalyzes the transcription of DNA into RNA using the four ribonucleoside triphosphates as substrates. This is DNA-directed RNA polymerase subunit beta' from Cryptomeria japonica (Japanese cedar).